The sequence spans 108 residues: DNA-directed RNA polymerase subunit omega (108 aa).

The interval 1 to 32 (MTNSQSDAALAAVPDRFDPSAGGPGAYDTPLG) is disordered.

This sequence belongs to the RNA polymerase subunit omega family. As to quaternary structure, the RNAP catalytic core consists of 2 alpha, 1 beta, 1 beta' and 1 omega subunit. When a sigma factor is associated with the core the holoenzyme is formed, which can initiate transcription.

It carries out the reaction RNA(n) + a ribonucleoside 5'-triphosphate = RNA(n+1) + diphosphate. In terms of biological role, promotes RNA polymerase assembly. Latches the N- and C-terminal regions of the beta' subunit thereby facilitating its interaction with the beta and alpha subunits. This is DNA-directed RNA polymerase subunit omega from Mycobacterium avium (strain 104).